Here is a 370-residue protein sequence, read N- to C-terminus: Actin-related protein 2/3 complex subunit 1A (370 aa).

6 WD repeats span residues 6–45, 50–89, 140–179, 202–241, 244–284, and 322–365; these read FLLEPITCHAWNRDRTQIALSPNNHEVHIYKKNGSQWTKA, EHNGHITGIDWAPKSDRIVTCGADRNAYVWSQKDGIWKPT, PIRSTVLSLDWHPNNVLLAAGSCDFKCRVFSAYIKEVDEK, GTGGWVHGVSFSASGSRLAWVSHDSTVSVADASKSVQVST, TEFL…TFVS, and LHQN…SSIQ.

Belongs to the WD repeat ARPC1 family. In terms of assembly, probable component of the Arp2/3 complex in which it may replace ARPC1B.

The protein resides in the cytoplasm. It localises to the cytoskeleton. The protein localises to the nucleus. Functionally, probably functions as a component of the Arp2/3 complex which is involved in regulation of actin polymerization and together with an activating nucleation-promoting factor (NPF) mediates the formation of branched actin networks. In addition to its role in the cytoplasmic cytoskeleton, the Arp2/3 complex also promotes actin polymerization in the nucleus, thereby regulating gene transcription and repair of damaged DNA. The chain is Actin-related protein 2/3 complex subunit 1A (Arpc1a) from Rattus norvegicus (Rat).